An 83-amino-acid chain; its full sequence is Small ribosomal subunit protein bS20 (83 aa).

Over residues 1-11 (MANHKSAAKRA) the composition is skewed to basic residues. Residues 1-44 (MANHKSAAKRAKQSEARRLRNKSTRSSMNTAVKKVRTAKEAGTD) form a disordered region.

It belongs to the bacterial ribosomal protein bS20 family.

Functionally, binds directly to 16S ribosomal RNA. The sequence is that of Small ribosomal subunit protein bS20 from Desulforapulum autotrophicum (strain ATCC 43914 / DSM 3382 / VKM B-1955 / HRM2) (Desulfobacterium autotrophicum).